We begin with the raw amino-acid sequence, 53 residues long: 20 kDa chaperonin (53 aa).

Cpn-10 domain regions lie at residues 1-10 (YTSIKPLGDR) and 11-53 (VAEA…KITP).

It belongs to the GroES chaperonin family. In terms of assembly, forms stable complexes with cpn60 in the presence of ATP. Homotetramer.

It is found in the plastid. Its subcellular location is the chloroplast. In terms of biological role, seems to function only as a co-chaperone, along with cpn60, and in certain cases is essential for the discharge of biologically active proteins from cpn60. In Populus euphratica (Euphrates poplar), this protein is 20 kDa chaperonin.